Consider the following 145-residue polypeptide: Small ribosomal subunit protein uS19 (145 aa).

Ala2 carries the post-translational modification N-acetylalanine. A Glycyl lysine isopeptide (Lys-Gly) (interchain with G-Cter in SUMO2) cross-link involves residue Lys108.

This sequence belongs to the universal ribosomal protein uS19 family. As to quaternary structure, component of the small ribosomal subunit.

It localises to the cytoplasm. Component of the small ribosomal subunit. The ribosome is a large ribonucleoprotein complex responsible for the synthesis of proteins in the cell. The chain is Small ribosomal subunit protein uS19 (RPS15) from Bos taurus (Bovine).